Reading from the N-terminus, the 368-residue chain is uncharacterized protein (368 aa).

Belongs to the Gfo/Idh/MocA family.

This is an uncharacterized protein from Schizosaccharomyces pombe (strain 972 / ATCC 24843) (Fission yeast).